Consider the following 37-residue polypeptide: Dolichyl-diphosphooligosaccharide--protein glycosyltransferase subunit 4 (37 aa).

Topologically, residues 1–4 (MITD) are lumenal. Residues 5 to 25 (VQLAIFANMLGVSLFLLVVLY) form a helical membrane-spanning segment. Residues 26–37 (HYVAVNNPKKQE) are Cytoplasmic-facing.

It belongs to the OST4 family. Component of the oligosaccharyltransferase (OST) complex. OST exists in two different complex forms which contain common core subunits RPN1, RPN2, OST48, OST4, DAD1 and TMEM258, either STT3A or STT3B as catalytic subunits, and form-specific accessory subunits. STT3A complex assembly occurs through the formation of 3 subcomplexes. Subcomplex 1 contains RPN1 and TMEM258, subcomplex 2 contains the STT3A-specific subunits STT3A, DC2/OSTC, and KCP2 as well as the core subunit OST4, and subcomplex 3 contains RPN2, DAD1, and OST48. The STT3A complex can form stable complexes with the Sec61 complex or with both the Sec61 and TRAP complexes.

The protein resides in the endoplasmic reticulum. It is found in the endoplasmic reticulum membrane. The protein operates within protein modification; protein glycosylation. Its function is as follows. Subunit of the oligosaccharyl transferase (OST) complex that catalyzes the initial transfer of a defined glycan (Glc(3)Man(9)GlcNAc(2) in eukaryotes) from the lipid carrier dolichol-pyrophosphate to an asparagine residue within an Asn-X-Ser/Thr consensus motif in nascent polypeptide chains, the first step in protein N-glycosylation. N-glycosylation occurs cotranslationally and the complex associates with the Sec61 complex at the channel-forming translocon complex that mediates protein translocation across the endoplasmic reticulum (ER). All subunits are required for a maximal enzyme activity. Specifically involved in maintaining stability of STT3A-containing OST complexes. The protein is Dolichyl-diphosphooligosaccharide--protein glycosyltransferase subunit 4 of Homo sapiens (Human).